The following is a 156-amino-acid chain: Small ribosomal subunit protein uS7 (156 aa).

It belongs to the universal ribosomal protein uS7 family. Part of the 30S ribosomal subunit. Contacts proteins S9 and S11.

One of the primary rRNA binding proteins, it binds directly to 16S rRNA where it nucleates assembly of the head domain of the 30S subunit. Is located at the subunit interface close to the decoding center, probably blocks exit of the E-site tRNA. This Ligilactobacillus salivarius (strain UCC118) (Lactobacillus salivarius) protein is Small ribosomal subunit protein uS7.